Consider the following 993-residue polypeptide: UPF0182 protein Sare_4110 (993 aa).

Helical transmembrane passes span Ile18–Trp38, Leu61–Leu81, Leu110–Gln130, Gly171–Phe191, Ala209–Asp229, Ile260–Met280, and Leu283–Ile303. Disordered stretches follow at residues Gln892–Ala937 and Glu974–Gly993. The span at Ser900–Val929 shows a compositional bias: pro residues. Positions Ala976 to Gly993 are enriched in low complexity.

It belongs to the UPF0182 family.

It is found in the cell membrane. The protein is UPF0182 protein Sare_4110 of Salinispora arenicola (strain CNS-205).